The primary structure comprises 345 residues: Carbamoyl phosphate synthase small chain (345 aa).

A CPSase region spans residues 1–169; sequence MKKYLVMEDG…FVKGEEGGTV (169 aa). 3 residues coordinate L-glutamine: Ser-45, Gly-213, and Gly-215. The Glutamine amidotransferase type-1 domain occupies 168–345; that stretch reads TVLFIDLGSK…GEMKRRIGYA (178 aa). Cys-242 (nucleophile) is an active-site residue. L-glutamine contacts are provided by Phe-243, Gln-246, Asn-282, Gly-284, and Tyr-285. Catalysis depends on residues His-321 and Glu-323.

Belongs to the CarA family. As to quaternary structure, composed of two chains; the small (or glutamine) chain promotes the hydrolysis of glutamine to ammonia, which is used by the large (or ammonia) chain to synthesize carbamoyl phosphate. Tetramer of heterodimers (alpha,beta)4.

It catalyses the reaction hydrogencarbonate + L-glutamine + 2 ATP + H2O = carbamoyl phosphate + L-glutamate + 2 ADP + phosphate + 2 H(+). The enzyme catalyses L-glutamine + H2O = L-glutamate + NH4(+). Its pathway is amino-acid biosynthesis; L-arginine biosynthesis; carbamoyl phosphate from bicarbonate: step 1/1. It participates in pyrimidine metabolism; UMP biosynthesis via de novo pathway; (S)-dihydroorotate from bicarbonate: step 1/3. Functionally, small subunit of the glutamine-dependent carbamoyl phosphate synthetase (CPSase). CPSase catalyzes the formation of carbamoyl phosphate from the ammonia moiety of glutamine, carbonate, and phosphate donated by ATP, constituting the first step of 2 biosynthetic pathways, one leading to arginine and/or urea and the other to pyrimidine nucleotides. The small subunit (glutamine amidotransferase) binds and cleaves glutamine to supply the large subunit with the substrate ammonia. This Thermoplasma volcanium (strain ATCC 51530 / DSM 4299 / JCM 9571 / NBRC 15438 / GSS1) protein is Carbamoyl phosphate synthase small chain.